Consider the following 103-residue polypeptide: NADH dehydrogenase [ubiquinone] 1 beta subcomplex subunit 7 (103 aa).

The region spanning 27-69 (RDMCAHLLIPLNKCRQAEFYLPWKCEDERHVYEKCEYELVMER) is the CHCH domain. 2 consecutive short sequence motifs (cx9C motif) follow at residues 30-40 (CAHLLIPLNKC) and 51-61 (CEDERHVYEKC). Disulfide bonds link Cys-30-Cys-61 and Cys-40-Cys-51.

It belongs to the complex I NDUFB7 subunit family. In terms of assembly, complex I is composed of at least 49 different subunits.

The protein localises to the mitochondrion. It is found in the mitochondrion inner membrane. It localises to the mitochondrion intermembrane space. Its function is as follows. Accessory subunit of the mitochondrial membrane respiratory chain NADH dehydrogenase (Complex I), that is believed not to be involved in catalysis. Complex I functions in the transfer of electrons from NADH to the respiratory chain. The immediate electron acceptor for the enzyme is believed to be ubiquinone. In Arabidopsis thaliana (Mouse-ear cress), this protein is NADH dehydrogenase [ubiquinone] 1 beta subcomplex subunit 7.